The primary structure comprises 266 residues: Blue copper protein (266 aa).

The first 24 residues, 1-24, serve as a signal peptide directing secretion; it reads MAYSKILFCFMIGFVGFLPAITMA. Phytocyanin domains lie at 25-56, 57-102, and 116-216; these read TQYL…GDTL, APPP…TVED, and TEYW…TVEG. Residue Asn47 is glycosylated (N-linked (GlcNAc...) asparagine). Position 156 (His156) interacts with Cu cation. The N-linked (GlcNAc...) asparagine glycan is linked to Asn162. Cys169 and Cys203 are oxidised to a cystine. Cu cation-binding residues include Cys197, His202, and Gln208. Residues 245 to 265 traverse the membrane as a helical segment; the sequence is ITSPYKMFVGGAVSIWTILTL.

It is found in the membrane. The sequence is that of Blue copper protein from Petunia hybrida (Petunia).